A 357-amino-acid chain; its full sequence is NADPH HC-toxin reductase 1 (357 aa).

NADP(+) contacts are provided by residues R40, K47, D68–L69, V88–T90, Y178, K182, L207–V210, and T222. The active-site Proton donor is the K182.

It belongs to the NAD(P)-dependent epimerase/dehydratase family.

With respect to regulation, activity is sensitive to heat, dependent on NADPH, and inhibited by p-hydroxymercuribenzoate and disulfiram. In terms of biological role, in tandem with Hm2, NADPH-dependent Helminthosporium carbonum (HC) toxin reductase (HCTR), which inactivates HC toxin, a cyclic tetrapeptide produced by the fungus Cochliobolus carbonum to permit infection and acting as an inhibitor of host histone deacetylases (HDACs), thus conferring resistance against C.carbonum race 1 in resistant cultivars (e.g. cv. B73 and cv. Wisconsin 22). Catalyzes the production of 8-hydroxy derivative of HC-toxin via the reduction of the 8-keto group of 2-amino-9,10-epoxy-8-oxo-decanoic acid, an amino acid of the HC-toxin. This is NADPH HC-toxin reductase 1 from Zea mays (Maize).